Reading from the N-terminus, the 206-residue chain is Adenylate kinase (206 aa).

Position 10-15 (10-15) interacts with ATP; that stretch reads GAGKGT. An NMP region spans residues 30–59; sequence STGDMLRAAVAAGTPVGLKAKDIMASGGLV. AMP contacts are provided by residues Thr31, Arg36, 57–59, 85–88, and Gln92; these read GLV and GFPR. The interval 126–142 is LID; that stretch reads NRVAETTARGEQVRADD. Residue Arg127 participates in ATP binding. AMP contacts are provided by Arg139 and Arg150. ATP is bound at residue Met178.

It belongs to the adenylate kinase family. In terms of assembly, monomer.

Its subcellular location is the cytoplasm. It carries out the reaction AMP + ATP = 2 ADP. Its pathway is purine metabolism; AMP biosynthesis via salvage pathway; AMP from ADP: step 1/1. Functionally, catalyzes the reversible transfer of the terminal phosphate group between ATP and AMP. Plays an important role in cellular energy homeostasis and in adenine nucleotide metabolism. The chain is Adenylate kinase from Nitrobacter winogradskyi (strain ATCC 25391 / DSM 10237 / CIP 104748 / NCIMB 11846 / Nb-255).